Consider the following 1096-residue polypeptide: Protein EMBRYONIC FLOWER 1 (1096 aa).

Disordered stretches follow at residues 155 to 189, 274 to 296, 315 to 348, 366 to 420, 563 to 612, 629 to 651, 1007 to 1032, and 1070 to 1096; these read KARG…EKLN, KTSG…VRGR, GATS…KGKQ, ETSQ…KKPV, LSRV…DIPM, DKEE…KNAL, DKEK…KNSS, and FKKK…TQNA. 2 consecutive short sequence motifs (nuclear localization signal) follow at residues 170–177 and 281–288; these read SRKLVSPE and IRKEESAL. A compositionally biased stretch (basic and acidic residues) spans 281 to 294; that stretch reads IRKEESALKKESVR. Positions 315–337 are enriched in polar residues; it reads GATSENASKSCDSDQGNSESTDS. Positions 337 to 617 are DNA-binding; the sequence is SGFDRTPFKG…DDIPMEIVEL (281 aa). Positions 371-381 are enriched in basic and acidic residues; it reads GIKEHDADPSK. The segment covering 382–394 has biased composition (polar residues); sequence RSTPAHSLFTGND. Basic and acidic residues predominate over residues 572–601; sequence SGADRKGKTVMVQEHHGAPRSQSHDRKETT. The tract at residues 866-1096 is DNA-binding; sequence LDPRLRSTTP…KPVCPPTQNA (231 aa). The segment covering 1018–1032 has biased composition (polar residues); sequence SCNNNASAGPVKNSS. The Nuclear localization signal 3 signature appears at 1071–1078; that stretch reads KKKPAVCK.

In terms of assembly, interacts with MSI1. As to expression, expressed in mature embryo, root tips, cotyledons, leaves, stems, shoot apex, and flower clusters, with highest levels in flowers. The presence in the shoot apical meristem (SAM) is required to maintain vegetative development and prevent early flowering.

Its subcellular location is the nucleus. Its function is as follows. Transcription repressor that regulates phase transition during shoot, flower and seeds development. Controls leaves development, shoot architecture and flowering by delaying both the vegetative to reproductive transition and flower initiation. Participates in polycomb group (PcG) protein complex-mediated (including EMF2) silencing of the flower homeotic genes AGAMOUS (AG), PISTILLATA (PI), and APETALA3 (AP3), as well as of some regulatory genes such as ABSCISIC ACID INSENSITIVE3 (ABI3), LONG VEGETATIVE PHASE1 (LOV1), and FLOWERING LOCUS C (FLC) during vegetative development. Required for histone methylation or for maintaining a stable histone methylation (e.g. H3K27me3) pattern of repressed target genes (including genes involved in salt stress response and flower development); this repression is counteracted by ULT1. Can bind non specifically DNA (both double- and single-stranded) and RNA. In Arabidopsis thaliana (Mouse-ear cress), this protein is Protein EMBRYONIC FLOWER 1.